The chain runs to 400 residues: Formate-dependent phosphoribosylglycinamide formyltransferase (400 aa).

Residues 22–23 (EL) and glutamate 82 each bind N(1)-(5-phospho-beta-D-ribosyl)glycinamide. Residues arginine 115, lysine 156, 161-166 (SSGKGQ), 196-199 (EGFI), and glutamate 204 each bind ATP. An ATP-grasp domain is found at 120-309 (RLAAETLGLP…EFALHARAIL (190 aa)). The Mg(2+) site is built by glutamate 268 and glutamate 280. N(1)-(5-phospho-beta-D-ribosyl)glycinamide is bound by residues aspartate 287, lysine 361, and 368–369 (RR).

The protein belongs to the PurK/PurT family. As to quaternary structure, homodimer.

It catalyses the reaction N(1)-(5-phospho-beta-D-ribosyl)glycinamide + formate + ATP = N(2)-formyl-N(1)-(5-phospho-beta-D-ribosyl)glycinamide + ADP + phosphate + H(+). The protein operates within purine metabolism; IMP biosynthesis via de novo pathway; N(2)-formyl-N(1)-(5-phospho-D-ribosyl)glycinamide from N(1)-(5-phospho-D-ribosyl)glycinamide (formate route): step 1/1. Its function is as follows. Involved in the de novo purine biosynthesis. Catalyzes the transfer of formate to 5-phospho-ribosyl-glycinamide (GAR), producing 5-phospho-ribosyl-N-formylglycinamide (FGAR). Formate is provided by PurU via hydrolysis of 10-formyl-tetrahydrofolate. This Xanthomonas oryzae pv. oryzae (strain KACC10331 / KXO85) protein is Formate-dependent phosphoribosylglycinamide formyltransferase.